A 578-amino-acid polypeptide reads, in one-letter code: L-aspartate oxidase (578 aa).

FAD contacts are provided by residues 36–39, Lys-58, 65–72, and Asp-231; these read AGAA and ASDWAQGG. Residue Arg-298 is the Proton donor/acceptor of the active site. FAD is bound by residues Glu-387 and 403–404; that span reads SL.

It belongs to the FAD-dependent oxidoreductase 2 family. NadB subfamily. FAD is required as a cofactor.

The protein localises to the cytoplasm. The enzyme catalyses L-aspartate + O2 = iminosuccinate + H2O2. It participates in cofactor biosynthesis; NAD(+) biosynthesis; iminoaspartate from L-aspartate (oxidase route): step 1/1. Its function is as follows. Catalyzes the oxidation of L-aspartate to iminoaspartate, the first step in the de novo biosynthesis of NAD(+). This chain is L-aspartate oxidase (nadB), found in Nostoc sp. (strain PCC 7120 / SAG 25.82 / UTEX 2576).